Here is a 307-residue protein sequence, read N- to C-terminus: tRNA pseudouridine synthase B (307 aa).

Asp-48 acts as the Nucleophile in catalysis.

It belongs to the pseudouridine synthase TruB family. Type 1 subfamily.

The enzyme catalyses uridine(55) in tRNA = pseudouridine(55) in tRNA. In terms of biological role, responsible for synthesis of pseudouridine from uracil-55 in the psi GC loop of transfer RNAs. The chain is tRNA pseudouridine synthase B from Pasteurella multocida (strain Pm70).